Here is a 272-residue protein sequence, read N- to C-terminus: Shikimate dehydrogenase (NADP(+)) (272 aa).

Shikimate contacts are provided by residues 14–16 (SKS) and threonine 61. Lysine 65 acts as the Proton acceptor in catalysis. NADP(+) is bound at residue glutamate 77. The shikimate site is built by asparagine 86 and aspartate 102. Residues 126–130 (GAGGA), 149–154 (NRTVSR), and methionine 213 contribute to the NADP(+) site. Tyrosine 215 is a shikimate binding site. Glycine 237 contacts NADP(+).

This sequence belongs to the shikimate dehydrogenase family. In terms of assembly, homodimer.

It carries out the reaction shikimate + NADP(+) = 3-dehydroshikimate + NADPH + H(+). It participates in metabolic intermediate biosynthesis; chorismate biosynthesis; chorismate from D-erythrose 4-phosphate and phosphoenolpyruvate: step 4/7. Involved in the biosynthesis of the chorismate, which leads to the biosynthesis of aromatic amino acids. Catalyzes the reversible NADPH linked reduction of 3-dehydroshikimate (DHSA) to yield shikimate (SA). This is Shikimate dehydrogenase (NADP(+)) from Shigella boydii serotype 18 (strain CDC 3083-94 / BS512).